The primary structure comprises 410 residues: Aminopeptidase AmpS (410 aa).

Positions 250, 316, 340, 345, 378, and 380 each coordinate a divalent metal cation.

Belongs to the peptidase M29 family. Co(2+) is required as a cofactor. Zn(2+) serves as cofactor. Requires Mg(2+) as cofactor.

Metal-dependent exopeptidase. This is Aminopeptidase AmpS (ampS) from Bacillus subtilis (strain 168).